We begin with the raw amino-acid sequence, 428 residues long: MSFQSLGRDDLLAQHELQQRNYAELQAKQLKLDLTRGKPSPEQLDLSNGLLSLPGDGADAYRDGHGTDTRNYGGVQGLPELRAIFAELLGLPVENLIAGNNASLEMMHDSVVFSLLHGGLDSPRPWSAEPTVKFLCPAPGYDRHFAITESFGIENVPVPIREDGPDVDVIEQLVASDPTIKGIWCVPVYSNPTGATYSTDVIRRLVQMPTAAKDFRLMWDNAYAVHTLTDEFVEPVDVLGLAAAAGNPNRPLVFASTSKITFAGAGVSFLGASADNIAWYLKHAGKKSIGPDKVNQLRHLRFFGDADGVRRQMQRHRELIAPKFALVAEILEDRLGESKIASWTDPKGGYFVSLDVWPGTAKRTVALAKDAGIAVTEAGSAFPYRKDPEDKNIRIAPTFPSLPDVRDAIDGLATCALLAATEALLGDK.

A substrate-binding site is contributed by Gly-37. Pyridoxal 5'-phosphate-binding positions include Tyr-72, 102-105 (ASLE), Asn-191, 222-225 (AYAV), and 256-258 (STS). Residue Lys-339 forms an Isoglutamyl lysine isopeptide (Lys-Gln) (interchain with Q-Cter in protein Pup) linkage.

The protein belongs to the class-I pyridoxal-phosphate-dependent aminotransferase family. Pyridoxal 5'-phosphate serves as cofactor.

This chain is Putative aminotransferase MSMEG_6286/MSMEI_6121, found in Mycolicibacterium smegmatis (strain ATCC 700084 / mc(2)155) (Mycobacterium smegmatis).